Reading from the N-terminus, the 450-residue chain is Solute carrier family 52, riboflavin transporter, member 2 (450 aa).

5 consecutive transmembrane segments (helical) span residues 14–34, 47–67, 86–106, 112–132, and 147–167; these read LLVALFGMGSWAAVNGIWVEL, LPSYLSVLVALGNLGLLLVTL, GLGIVGTGLLASLWNHVAPVA, VAFLTLAFVLALACCASNVTF, and FFLGQGLSALLPCVLALGQGV. A glycan (N-linked (GlcNAc...) asparagine) is linked at Asn178. The chain crosses the membrane as a helical span at residues 201–221; the sequence is FFWVLTALLGTSAAAFQGLLL. Residues 227-236 are compositionally biased toward low complexity; sequence TSEPTTGTGL. Positions 227 to 264 are disordered; sequence TSEPTTGTGLRVETPGTEEEEEEEEASPLQEPPGQVAG. Acidic residues predominate over residues 242–252; that stretch reads GTEEEEEEEEA. The next 5 helical transmembrane spans lie at 282–302, 317–337, 344–364, 369–389, and 409–429; these read ACLLGLLAITNALTNGVLPAV, LAVVLGSCANPLACFLAMAVL, LCGLSLLGMLLGSYLMTLAAL, PLVGTSAGVVLVVLSWVLCAG, and ALLAAGVAIQVGSLLGAVAMF.

The protein belongs to the riboflavin transporter family.

The protein resides in the cell membrane. The enzyme catalyses riboflavin(in) = riboflavin(out). Riboflavin transport is Na(+)-independent but moderately pH-sensitive. Activity is strongly inhibited by riboflavin analogs, such as lumiflavin. Weakly inhibited by flavin adenine dinucleotide (FAD) and flavin mononucleotide (FMN). Functionally, plasma membrane transporter mediating the uptake by cells of the water soluble vitamin B2/riboflavin that plays a key role in biochemical oxidation-reduction reactions of the carbohydrate, lipid, and amino acid metabolism. May also act as a receptor for 4-hydroxybutyrate. In Mus musculus (Mouse), this protein is Solute carrier family 52, riboflavin transporter, member 2 (Slc52a2).